Reading from the N-terminus, the 505-residue chain is Lysine--tRNA ligase (505 aa).

Mg(2+)-binding residues include glutamate 415 and glutamate 422.

The protein belongs to the class-II aminoacyl-tRNA synthetase family. As to quaternary structure, homodimer. It depends on Mg(2+) as a cofactor.

It localises to the cytoplasm. It carries out the reaction tRNA(Lys) + L-lysine + ATP = L-lysyl-tRNA(Lys) + AMP + diphosphate. The sequence is that of Lysine--tRNA ligase from Serratia proteamaculans (strain 568).